Reading from the N-terminus, the 257-residue chain is Flap endonuclease Xni (257 aa).

Residue aspartate 112 coordinates Mg(2+). The region spanning 169–256 (EQKKLVEFWA…LGFSLKQLRL (88 aa)) is the 5'-3' exonuclease domain. K(+) is bound by residues phenylalanine 179, alanine 180, proline 188, valine 190, and isoleucine 193. Residues 192-197 (GIGTKS) are interaction with DNA.

This sequence belongs to the Xni family. It depends on Mg(2+) as a cofactor. K(+) serves as cofactor.

Functionally, has flap endonuclease activity. During DNA replication, flap endonucleases cleave the 5'-overhanging flap structure that is generated by displacement synthesis when DNA polymerase encounters the 5'-end of a downstream Okazaki fragment. This Pseudoalteromonas translucida (strain TAC 125) protein is Flap endonuclease Xni.